A 132-amino-acid chain; its full sequence is Large ribosomal subunit protein uL14 (132 aa).

This sequence belongs to the universal ribosomal protein uL14 family. The L3/L14/L24e cluster may contact the 16S rRNA in 2 intersubunit bridges. Part of the 50S ribosomal subunit. Forms a cluster with proteins L3 and L24e.

In terms of biological role, forms part of two intersubunit bridges in the 70S ribosome. Binds to 23S rRNA. The protein is Large ribosomal subunit protein uL14 of Haloarcula marismortui (strain ATCC 43049 / DSM 3752 / JCM 8966 / VKM B-1809) (Halobacterium marismortui).